We begin with the raw amino-acid sequence, 160 residues long: Small ribosomal subunit protein uS10m (160 aa).

The protein belongs to the universal ribosomal protein uS10 family. In terms of assembly, component of the mitochondrial ribosome small subunit (28S) which comprises a 12S rRNA and about 30 distinct proteins.

The protein resides in the mitochondrion. This Mus musculus (Mouse) protein is Small ribosomal subunit protein uS10m (Mrps10).